We begin with the raw amino-acid sequence, 413 residues long: Ras association domain-containing protein 5 (413 aa).

The interval 1–103 (MASPAIGQRP…RPRDVRSIFE (103 aa)) is disordered. Over residues 52-74 (SEDRGGRRSGRRDPEPTPRDCRH) the composition is skewed to basic and acidic residues. The segment at 117-165 (GHRFVELALRGGPGWCDLCGREVLRQALRCANCKFTCHSECRSLIQLDC) adopts a Phorbol-ester/DAG-type zinc-finger fold. Phosphoserine occurs at positions 177 and 274. Residues 265–359 (PAATTDKRTS…LSFVLKENET (95 aa)) enclose the Ras-associating domain. Thr347 carries the phosphothreonine modification. The SARAH domain occupies 361–408 (EVEWDAFSIPELQNFLTILEKEEQDKIHQLQKKYNKFRQKLEEALRES).

Interacts directly with activated HRAS; a RASSF5-STK4/MST1 complex probably associates with activated HRAS. Interacts with KRAS. Probably interacts with Ras-like GTPases RRAS, MRAS, RAP1B, RAP2A and RALA. Interacts with RRAS2. Can self-associate. Interacts with RSSF1 isoform A. The RSSF1 isoform A-RSSF5 heterodimer probably mediates the association of RSSF1 with HRAS. Isoform 2 interacts with activated RAP1A and ITGAL/LFA-1. Binds STK4/MST1, inhibiting STK4/MST1 autoactivation.

It localises to the cytoplasm. The protein localises to the cytoskeleton. Its function is as follows. Potential tumor suppressor. Seems to be involved in lymphocyte adhesion by linking RAP1A activation upon T-cell receptor or chemokine stimulation to integrin activation. Isoform 2 stimulates lymphocyte polarization and the patch-like distribution of ITGAL/LFA-1, resulting in an enhanced adhesion to ICAM1. Together with RAP1A may participate in regulation of microtubule growth. The association of isoform 2 with activated RAP1A is required for directional movement of endothelial cells during wound healing. May be involved in regulation of Ras apoptotic function. The RASSF5-STK4/MST1 complex may mediate HRAS and KRAS induced apoptosis. The chain is Ras association domain-containing protein 5 (Rassf5) from Mus musculus (Mouse).